We begin with the raw amino-acid sequence, 43 residues long: Protein PsbN (43 aa).

A helical membrane pass occupies residues 5 to 27; it reads TLVAISISGLLVSFTGYALYTAF.

Belongs to the PsbN family.

The protein resides in the plastid. It is found in the chloroplast thylakoid membrane. In terms of biological role, may play a role in photosystem I and II biogenesis. The chain is Protein PsbN from Eucalyptus globulus subsp. globulus (Tasmanian blue gum).